A 170-amino-acid polypeptide reads, in one-letter code: UPF0260 protein Rpal_2074 (170 aa).

The protein belongs to the UPF0260 family.

The chain is UPF0260 protein Rpal_2074 from Rhodopseudomonas palustris (strain TIE-1).